A 31-amino-acid polypeptide reads, in one-letter code: Palustrin-2c (31 aa).

An intrachain disulfide couples C23 to C29.

Expressed by the skin glands.

The protein resides in the secreted. Antimicrobial activity against Gram-negative bacterium E.coli. The polypeptide is Palustrin-2c (Lithobates palustris (Pickerel frog)).